Here is a 364-residue protein sequence, read N- to C-terminus: Anthranilate N-methyltransferase (364 aa).

Residues 1–20 form a disordered region; sequence MGSLSESHTQYKHGVEVEED. Gly-209, Asp-232, Met-253, and Lys-266 together coordinate S-adenosyl-L-methionine. His-270 acts as the Proton acceptor in catalysis.

Belongs to the class I-like SAM-binding methyltransferase superfamily. Cation-independent O-methyltransferase family. COMT subfamily. Homodimer. In terms of tissue distribution, expressed in leaves, flowers, stems and roots. Detected in the vascular tissues in stems, in the rhizodermis or the endodermis of roots, in the inside of carpels, in the central vascular bundles of the syncarp ovary and in the secretory oil glands located around the outer ovary wall.

The enzyme catalyses anthranilate + S-adenosyl-L-methionine = N-methylanthranilate + S-adenosyl-L-homocysteine + H(+). With respect to regulation, inhibited by Ca(2+), Co(2+), Fe(2+), Fe(3+), Cu(2+) or Zn(2+). No effect of Mg(2+). Involved in the biosynthesis of acridine alkaloids. N-methyltransferase with a strict substrate specificity for anthranilate. No activity with anthranilic acid methyl ester, anthraniloyl CoA, 3- or 4-amino-benzoic acid, salicylic acid, catechol, eugenol, caffeic acid, quercetin, theobromin, theophyllin, putrescine and nicotinic acid among others. This is Anthranilate N-methyltransferase from Ruta graveolens (Common rue).